A 508-amino-acid polypeptide reads, in one-letter code: MKHILLSCVESRIEHNRSFYSRFQLGPFDLGQGLTVGNAFRRTLLSELSGVGITLIEIDGVCHEYSTLPGVRESVLDILLNLKQLVLTSDTTFTVPQVGYLNFTGPGVVTAKDLKLPVSVYCVDPDQPIATLSADATLNFKFLVCQGKNYIIQTPVDKFHEYQKKILNSKLNLPLSSRTTLNSTFERPNQDSLVGTPLQEGVGKTKQNKRLNAHFQRQLKQLNRLKETSFKAYKTKVGEKTISDEFQTNSVNHQNLTTFDLREKKLTDVTTSLQHGEEATLLKEEGLNKLDNSSPQLENKLKGGRDFSGGSQLASQALPVDTLFMPIKKVNYMIDIDPAEPDRESVVLEIWTNGSIHPRQAVHEAAKQLIHLFSPFLQTHLVPTTLQSTPYSKAASKTQEFSLNETSTEKVKDELGKVAFGSENNTAALNQQKNLVTAIQTLDIANLNFSLRTFTFLKKENINTVSELVEFWTRQKTEAKDSIQSNVQSSVLLEISNNLKNFGVLPTS.

The alpha N-terminal domain (alpha-NTD) stretch occupies residues 1–380 (MKHILLSCVE…HLFSPFLQTH (380 aa)). The segment at 434 to 508 (NLVTAIQTLD…LKNFGVLPTS (75 aa)) is alpha C-terminal domain (alpha-CTD).

Belongs to the RNA polymerase alpha chain family. In plastids the minimal PEP RNA polymerase catalytic core is composed of four subunits: alpha, beta, beta', and beta''. When a (nuclear-encoded) sigma factor is associated with the core the holoenzyme is formed, which can initiate transcription.

The protein resides in the plastid. The protein localises to the chloroplast. It catalyses the reaction RNA(n) + a ribonucleoside 5'-triphosphate = RNA(n+1) + diphosphate. Functionally, DNA-dependent RNA polymerase catalyzes the transcription of DNA into RNA using the four ribonucleoside triphosphates as substrates. The protein is DNA-directed RNA polymerase subunit alpha (rpoA) of Oltmannsiellopsis viridis (Marine flagellate).